The primary structure comprises 155 residues: DNA gyrase inhibitor (155 aa).

The protein belongs to the DNA gyrase inhibitor family. Interacts with DNA gyrase.

Its subcellular location is the cytoplasm. Its function is as follows. Inhibits the supercoiling activity of DNA gyrase. Acts by inhibiting DNA gyrase at an early step, prior to (or at the step of) binding of DNA by the gyrase. It protects cells against toxins that target DNA gyrase, by inhibiting activity of these toxins and reducing the formation of lethal double-strand breaks in the cell. This Edwardsiella ictaluri (strain 93-146) protein is DNA gyrase inhibitor.